The sequence spans 108 residues: Nucleoid-associated protein BARBAKC583_1239 (108 aa).

This sequence belongs to the YbaB/EbfC family. Homodimer.

Its subcellular location is the cytoplasm. It localises to the nucleoid. Functionally, binds to DNA and alters its conformation. May be involved in regulation of gene expression, nucleoid organization and DNA protection. This is Nucleoid-associated protein BARBAKC583_1239 from Bartonella bacilliformis (strain ATCC 35685 / KC583 / Herrer 020/F12,63).